A 151-amino-acid chain; its full sequence is Transcriptional repressor NrdR (151 aa).

A zinc finger spans residues 3 to 34 (CPYCAYGESKVVDSRSTEDGSSIRRRRECLKC). One can recognise an ATP-cone domain in the interval 49–139 (ILVIKKNMSR…VYRQFKDINT (91 aa)).

It belongs to the NrdR family. It depends on Zn(2+) as a cofactor.

Its function is as follows. Negatively regulates transcription of bacterial ribonucleotide reductase nrd genes and operons by binding to NrdR-boxes. This is Transcriptional repressor NrdR from Clostridium botulinum (strain 657 / Type Ba4).